We begin with the raw amino-acid sequence, 118 residues long: NADH-ubiquinone oxidoreductase chain 3 (118 aa).

3 consecutive transmembrane segments (helical) span residues 9-29 (IYLV…FLFA), 62-82 (LVSI…PWAV), and 87-107 (IDLF…IGFL).

This sequence belongs to the complex I subunit 3 family.

The protein localises to the mitochondrion membrane. The enzyme catalyses a ubiquinone + NADH + 5 H(+)(in) = a ubiquinol + NAD(+) + 4 H(+)(out). Functionally, core subunit of the mitochondrial membrane respiratory chain NADH dehydrogenase (Complex I) that is believed to belong to the minimal assembly required for catalysis. Complex I functions in the transfer of electrons from NADH to the respiratory chain. The immediate electron acceptor for the enzyme is believed to be ubiquinone. This is NADH-ubiquinone oxidoreductase chain 3 (ND3) from Triticum aestivum (Wheat).